A 143-amino-acid polypeptide reads, in one-letter code: Large ribosomal subunit protein uL15 (143 aa).

The disordered stretch occupies residues 1 to 52 (MELNSIQPADGAKHYKRRVGRGIGSGLGKTSGRGHKGQKSRSGGFHKVGFEG). Over residues 21–31 (RGIGSGLGKTS) the composition is skewed to gly residues.

The protein belongs to the universal ribosomal protein uL15 family. As to quaternary structure, part of the 50S ribosomal subunit.

Binds to the 23S rRNA. This Janthinobacterium sp. (strain Marseille) (Minibacterium massiliensis) protein is Large ribosomal subunit protein uL15.